An 89-amino-acid chain; its full sequence is Sec-independent protein translocase protein TatA (89 aa).

Residues 1–21 form a helical membrane-spanning segment; sequence MFGLSPAQLIILLVVILLIFG.

It belongs to the TatA/E family. As to quaternary structure, the Tat system comprises two distinct complexes: a TatABC complex, containing multiple copies of TatA, TatB and TatC subunits, and a separate TatA complex, containing only TatA subunits. Substrates initially bind to the TatABC complex, which probably triggers association of the separate TatA complex to form the active translocon.

The protein localises to the cell inner membrane. In terms of biological role, part of the twin-arginine translocation (Tat) system that transports large folded proteins containing a characteristic twin-arginine motif in their signal peptide across membranes. TatA could form the protein-conducting channel of the Tat system. The sequence is that of Sec-independent protein translocase protein TatA from Haemophilus influenzae (strain ATCC 51907 / DSM 11121 / KW20 / Rd).